A 69-amino-acid chain; its full sequence is U2-agatoxin-Ao1c (69 aa).

The N-terminal stretch at 1–20 (MKAIISLLLISAMVFSMIEA) is a signal peptide. Residues 21–34 (VPVEEGLQLFEGER) constitute a propeptide that is removed on maturation. 3 cysteine pairs are disulfide-bonded: C36-C52, C43-C57, and C51-C67. L68 is modified (leucine amide).

It belongs to the neurotoxin 01 (U2-agtx) family. Expressed by the venom gland.

It is found in the secreted. Functionally, insect active toxin causing rapid but reversible paralysis in crickets. No activity shown in mammals. Does not show effect on mammalian voltage-gated calcium channels. The sequence is that of U2-agatoxin-Ao1c from Agelena orientalis (Funnel-web spider).